The chain runs to 156 residues: Ribosomal RNA large subunit methyltransferase H (156 aa).

Residues leucine 73, glycine 104, and 123 to 128 each bind S-adenosyl-L-methionine; that span reads LSPLTL.

This sequence belongs to the RNA methyltransferase RlmH family. As to quaternary structure, homodimer.

It localises to the cytoplasm. It carries out the reaction pseudouridine(1915) in 23S rRNA + S-adenosyl-L-methionine = N(3)-methylpseudouridine(1915) in 23S rRNA + S-adenosyl-L-homocysteine + H(+). Functionally, specifically methylates the pseudouridine at position 1915 (m3Psi1915) in 23S rRNA. This Yersinia enterocolitica serotype O:8 / biotype 1B (strain NCTC 13174 / 8081) protein is Ribosomal RNA large subunit methyltransferase H.